Consider the following 27-residue polypeptide: Cupiennin-4a (27 aa).

Glu27 bears the Glutamic acid 1-amide mark.

As to expression, expressed by the venom gland.

It localises to the secreted. The sequence is that of Cupiennin-4a from Cupiennius salei (American wandering spider).